Reading from the N-terminus, the 277-residue chain is NH(3)-dependent NAD(+) synthetase (277 aa).

G46–S53 lines the ATP pocket. D52 is a Mg(2+) binding site. A deamido-NAD(+)-binding site is contributed by R142. T162 contributes to the ATP binding site. Mg(2+) is bound at residue E167. Residues K175 and D182 each coordinate deamido-NAD(+). K191 and T213 together coordinate ATP. Position 263–264 (H263–K264) interacts with deamido-NAD(+).

It belongs to the NAD synthetase family. In terms of assembly, homodimer.

The enzyme catalyses deamido-NAD(+) + NH4(+) + ATP = AMP + diphosphate + NAD(+) + H(+). It functions in the pathway cofactor biosynthesis; NAD(+) biosynthesis; NAD(+) from deamido-NAD(+) (ammonia route): step 1/1. In terms of biological role, catalyzes the ATP-dependent amidation of deamido-NAD to form NAD. Uses ammonia as a nitrogen source. This is NH(3)-dependent NAD(+) synthetase from Corynebacterium glutamicum (strain ATCC 13032 / DSM 20300 / JCM 1318 / BCRC 11384 / CCUG 27702 / LMG 3730 / NBRC 12168 / NCIMB 10025 / NRRL B-2784 / 534).